The sequence spans 878 residues: MTSAEIREAFLRYFESQGHTRVASSSLVPANDPTLLFTNAGMNQFKDCFLGLEKRDYVRATTSQKCVRAGGKHNDLDNVGYTARHHTFFEMLGNFSFGDYFKRDALTFAWDFLTSEQWLGLPKDKLYVTVYHTDDEAYDIWNKEIGLAADRIIRIGDNKGEKYASDNFWAMGDTGPCGPCSEIFFDHGDHIWGGLPGTPEEDGDRFIEIWNNVFMQFNRTADGVLHPLPAPSVDTGMGLERISAVLQHVNSNYDIDLFQHLIKSACEIINVKDEGQPSLRVVADHARSCCFLIADGVNPSNEGRGYVLRRIIRRAVRHGNKLGATGTFFYKMLQPLIDVMGDAYPELKNDQARIEATLIREEEQFAKTLEQGLKLLEGELTQLSGKVIPGETVFKLYDTYGFPTDLTADIARERDLEIDEVGFEREMEAQRRRARDAGKFAVDYNSIVKVEGETQFDGYHATAGQGEIVAIYKDGEQVDEVVEGDEALIVLNQTPFYAESGGQIGDTGLFKNDTGIFEVQDTKKSGGAFVHQGIVTMGSLKAAQHVDAIVKADIRAATARNHSATHLLHAALRQILGTHVQQKGSLVASDILRFDFANDQPVSFEQLQEIERLVNAEVIANSAVTTELLDIESAKAKGAMMLFGEKYGDEVRVLSMGSVIDEHNFSIELCGGIHVQRTGDIGLFKIISEGGVAAGIRRIEAVTGTKALEVVQKADADIQHINSLLKAQKDQTVERVQAAVEQTSALHKQIEQLNQKLANFQAAELLSQVQNIAGRSTLITTVQNIDAKSLRNLHDSVKSKLEDAVIVLAGLEGDKISLIASVAKQYTAHLKAGDIIKHLATELGGKGGGKPDLAQGGAPLNEKFEHVIAALPAWLEQH.

Residues H562, H566, C670, and H674 each contribute to the Zn(2+) site.

The protein belongs to the class-II aminoacyl-tRNA synthetase family. Requires Zn(2+) as cofactor.

It localises to the cytoplasm. It catalyses the reaction tRNA(Ala) + L-alanine + ATP = L-alanyl-tRNA(Ala) + AMP + diphosphate. Functionally, catalyzes the attachment of alanine to tRNA(Ala) in a two-step reaction: alanine is first activated by ATP to form Ala-AMP and then transferred to the acceptor end of tRNA(Ala). Also edits incorrectly charged Ser-tRNA(Ala) and Gly-tRNA(Ala) via its editing domain. The sequence is that of Alanine--tRNA ligase from Acinetobacter baylyi (strain ATCC 33305 / BD413 / ADP1).